A 199-amino-acid chain; its full sequence is Probable GTP-binding protein EngB (199 aa).

In terms of domain architecture, EngB-type G spans 25–199 (IGMEVAFVGY…LKRVLNNWLR (175 aa)). Residues serine 40 and threonine 62 each contribute to the Mg(2+) site.

It belongs to the TRAFAC class TrmE-Era-EngA-EngB-Septin-like GTPase superfamily. EngB GTPase family. It depends on Mg(2+) as a cofactor.

Necessary for normal cell division and for the maintenance of normal septation. This Blochmanniella pennsylvanica (strain BPEN) protein is Probable GTP-binding protein EngB.